Here is a 6359-residue protein sequence, read N- to C-terminus: Bacitracin synthase 3 (6359 aa).

The tract at residues 461 to 1034 (LHELFEEQAM…IKGLGEYIRS (574 aa)) is domain 1 (isoleucine-activating). Positions 941–953 (VDRKALPEPDRTA) are enriched in basic and acidic residues. The disordered stretch occupies residues 941–962 (VDRKALPEPDRTAGAENEYEAP). Carrier domains are found at residues 961–1036 (APRN…RSTK), 1993–2067 (APRN…KKQS), 3497–3572 (APRN…ESMK), 4539–4613 (PPRN…KAES), and 6047–6122 (PPRH…KHAQ). O-(pantetheine 4'-phosphoryl)serine is present on residues Ser996, Ser2028, and Ser3532. A domain 2 (D-phenylalanine-activating) region spans residues 1517–2064 (FEDQTLTYRQ…RIKDLAKYVK (548 aa)). A domain 3 (histidine-activating) region spans residues 2999–3570 (NKTIHQLFEE…IKDIGDFIES (572 aa)). Positions 4047–4612 (EQTAVVYADE…KSLSRYVKAE (566 aa)) are domain 4 (D-aspartic acid-activating). The interval 4521–4544 (IDTAALPEPQPGKETEYEPPRNET) is disordered. The segment covering 4531-4544 (PGKETEYEPPRNET) has biased composition (basic and acidic residues). An O-(pantetheine 4'-phosphoryl)serine mark is found at Ser4574 and Ser6082. Residues 5549–6129 (IHRLFEEQAE…HAQDLLKDYT (581 aa)) are domain 5 (asparagine-activating).

This sequence belongs to the ATP-dependent AMP-binding enzyme family. In terms of assembly, large multienzyme complex of BA1, BA2 and BA3. It depends on pantetheine 4'-phosphate as a cofactor.

It catalyses the reaction L-aspartate = D-aspartate. It carries out the reaction L-phenylalanine + ATP + H2O = D-phenylalanine + AMP + diphosphate + H(+). The protein operates within antibiotic biosynthesis; bacitracin biosynthesis. In terms of biological role, induces peptide synthesis, activates and incorporates five amino acids, forms a thiazoline ring between the first two amino acids and incorporates a D-glutamine in the fourth position. The protein is Bacitracin synthase 3 (bacC) of Bacillus licheniformis.